We begin with the raw amino-acid sequence, 364 residues long: sn-glycerol-3-phosphate import ATP-binding protein UgpC (364 aa).

One can recognise an ABC transporter domain in the interval 4–235 (VVLRNVRKTY…PATTFVASFI (232 aa)). An ATP-binding site is contributed by 37 to 44 (GPSGCGKS).

This sequence belongs to the ABC transporter superfamily. sn-glycerol-3-phosphate importer (TC 3.A.1.1.3) family. The complex is composed of two ATP-binding proteins (UgpC), two transmembrane proteins (UgpA and UgpE) and a solute-binding protein (UgpB).

The protein localises to the cell inner membrane. The catalysed reaction is sn-glycerol 3-phosphate(out) + ATP + H2O = sn-glycerol 3-phosphate(in) + ADP + phosphate + H(+). In terms of biological role, part of the ABC transporter complex UgpBAEC involved in sn-glycerol-3-phosphate (G3P) import. Responsible for energy coupling to the transport system. The sequence is that of sn-glycerol-3-phosphate import ATP-binding protein UgpC from Rhodopseudomonas palustris (strain BisB5).